Here is a 32-residue protein sequence, read N- to C-terminus: Variegin (32 aa).

The segment at 1 to 32 is disordered; that stretch reads SDQGDVAEPKMHKTAPPFDFEAIPEEYLDDES. A contains the active site region spans residues 8-14; the sequence is EPKMHKT. A glycan (O-linked (Hex) threonine) is linked at T14. The span at 22 to 32 shows a compositional bias: acidic residues; that stretch reads AIPEEYLDDES.

Interacts with human F2 (thrombin); the interaction results in thrombin inhibition.

The protein localises to the secreted. Its function is as follows. Thrombin inhibitor. Does not inhibit other serine proteases. This is Variegin from Amblyomma variegatum (Tropical bont tick).